The primary structure comprises 105 residues: Large ribosomal subunit protein bL21 (105 aa).

The protein belongs to the bacterial ribosomal protein bL21 family. In terms of assembly, part of the 50S ribosomal subunit. Contacts protein L20.

This protein binds to 23S rRNA in the presence of protein L20. The protein is Large ribosomal subunit protein bL21 of Rhizobium etli (strain CIAT 652).